The chain runs to 138 residues: Large ribosomal subunit protein uL16 (138 aa).

Belongs to the universal ribosomal protein uL16 family. In terms of assembly, part of the 50S ribosomal subunit.

Binds 23S rRNA and is also seen to make contacts with the A and possibly P site tRNAs. The polypeptide is Large ribosomal subunit protein uL16 (Neisseria gonorrhoeae (strain ATCC 700825 / FA 1090)).